A 255-amino-acid polypeptide reads, in one-letter code: UPF0246 protein Cphy_1568 (255 aa).

It belongs to the UPF0246 family.

This chain is UPF0246 protein Cphy_1568, found in Lachnoclostridium phytofermentans (strain ATCC 700394 / DSM 18823 / ISDg) (Clostridium phytofermentans).